The chain runs to 242 residues: ATP synthase subunit a (242 aa).

6 consecutive transmembrane segments (helical) span residues 29 to 49 (SAVA…TAFV), 84 to 104 (FFPL…LGMV), 114 to 134 (IIVT…YGIY), 140 to 160 (FFSL…MVII), 181 to 201 (VAGH…TWLF), and 206 to 226 (IALV…QAYI).

This sequence belongs to the ATPase A chain family. F-type ATPases have 2 components, CF(1) - the catalytic core - and CF(0) - the membrane proton channel. CF(1) has five subunits: alpha(3), beta(3), gamma(1), delta(1), epsilon(1). CF(0) has three main subunits: a(1), b(2) and c(9-12). The alpha and beta chains form an alternating ring which encloses part of the gamma chain. CF(1) is attached to CF(0) by a central stalk formed by the gamma and epsilon chains, while a peripheral stalk is formed by the delta and b chains.

It localises to the cell inner membrane. In terms of biological role, key component of the proton channel; it plays a direct role in the translocation of protons across the membrane. This is ATP synthase subunit a from Orientia tsutsugamushi (strain Ikeda) (Rickettsia tsutsugamushi).